Reading from the N-terminus, the 459-residue chain is Ribulose bisphosphate carboxylase (459 aa).

N111 is a binding site for substrate. Residue K166 is the Proton acceptor of the active site. K168 lines the substrate pocket. Positions 191, 193, and 194 each coordinate Mg(2+). K191 is subject to N6-carboxylysine. The active-site Proton acceptor is H287. Substrate is bound by residues R288, H321, and S368.

It belongs to the RuBisCO large chain family. Type II subfamily. Homodimer. Mg(2+) is required as a cofactor.

It is found in the cytoplasm. It catalyses the reaction 2 (2R)-3-phosphoglycerate + 2 H(+) = D-ribulose 1,5-bisphosphate + CO2 + H2O. The catalysed reaction is D-ribulose 1,5-bisphosphate + O2 = 2-phosphoglycolate + (2R)-3-phosphoglycerate + 2 H(+). In terms of biological role, ruBisCO catalyzes two reactions: the carboxylation of D-ribulose 1,5-bisphosphate, the primary event in carbon dioxide fixation, as well as the oxidative fragmentation of the pentose substrate. Both reactions occur simultaneously and in competition at the same active site. This is Ribulose bisphosphate carboxylase from Halothiobacillus neapolitanus (strain ATCC 23641 / c2) (Thiobacillus neapolitanus).